Consider the following 337-residue polypeptide: Transcription factor HBI1 (337 aa).

The interval 119–180 (VALKNKRKPE…SKGASENQKL (62 aa)) is disordered. Residues 126 to 151 (KPEVKTREEQKTEKKIKVEAETESSM) are compositionally biased toward basic and acidic residues. The segment covering 152-165 (KGKSNMGNTEASSD) has biased composition (polar residues). One can recognise a bHLH domain in the interval 191 to 241 (QATDRHSLAERARREKISKKMKYLQDIVPGCNKVTGKAGMLDEIINYVQCL).

In terms of assembly, homodimer. Interacts with IBH1. As to expression, highly expressed in hypocotyls and cotyledons. Expressed in leaves, stems, and flowers.

Its subcellular location is the nucleus. Atypical bHLH transcription factor that acts as a positive regulator of cell elongation downstream of multiple external and endogenous signals by direct binding to the promoters and activation of the two expansin genes EXPA1 and EXPA8, encoding cell wall loosening enzymes. Transcriptional activity is inhibited when binding to the bHLH transcription factor IBH1. The polypeptide is Transcription factor HBI1 (HBI1) (Arabidopsis thaliana (Mouse-ear cress)).